Here is a 383-residue protein sequence, read N- to C-terminus: Protein delta homolog 2 (383 aa).

An N-terminal signal peptide occupies residues 1–26; sequence MPSGCRCLHLVCLLCILGAPVKPARG. EGF-like domains follow at residues 27 to 58, 62 to 89, 91 to 129, and 131 to 172; these read NDCS…LHCE, RMPG…KFCD, DEHI…RDCE, and KAGP…ARCE. Residues 27 to 306 are Extracellular-facing; that stretch reads NDCSSLCDLA…RQEAGLGEPS (280 aa). 17 disulfides stabilise this stretch: cysteine 29/cysteine 40, cysteine 33/cysteine 46, cysteine 48/cysteine 57, cysteine 66/cysteine 71, cysteine 79/cysteine 88, cysteine 95/cysteine 107, cysteine 101/cysteine 117, cysteine 119/cysteine 128, cysteine 135/cysteine 148, cysteine 142/cysteine 160, cysteine 162/cysteine 171, cysteine 178/cysteine 189, cysteine 183/cysteine 198, cysteine 200/cysteine 209, cysteine 216/cysteine 227, cysteine 221/cysteine 236, and cysteine 238/cysteine 247. Asparagine 157 carries N-linked (GlcNAc...) asparagine glycosylation. The EGF-like 5; calcium-binding domain occupies 174–210; it reads NVDDCLMRPCANGATCLDGINRFSCLCPEGFTGRFCT. An EGF-like 6; calcium-binding domain is found at 212-248; that stretch reads NLDDCASRPCQRGARCRDRVHDFDCLCPSGYGGKTCE. The chain crosses the membrane as a helical span at residues 307–327; it reads LVAVVVFGAVTAALVLSTVLL. At 328–383 the chain is on the cytoplasmic side; it reads TLRAWRRGFCPPGPCCYPAPHYAPARQDQECQVSMLPTGLPLPPDLPPEPGKTTAL. Positions 364-383 are disordered; that stretch reads PTGLPLPPDLPPEPGKTTAL. Positions 367 to 377 are enriched in pro residues; that stretch reads LPLPPDLPPEP.

It is found in the membrane. Functionally, regulates adipogenesis. This Bos taurus (Bovine) protein is Protein delta homolog 2 (DLK2).